We begin with the raw amino-acid sequence, 284 residues long: Esterase alnB (284 aa).

Residues S93, D226, and H255 each act as charge relay system in the active site.

It belongs to the LovG family.

The protein operates within polyketide biosynthesis. Its function is as follows. Esterase; part of the gene cluster that mediates the biosynthesis of asperlin, a polyketide showing anti-inflammatory, antitumor and antibiotic activities. The first step of the asperlin biosynthesis is the production of the intermediate 2,4,6-octatrienoic acid by the highly redusing polyketide synthase alnA with cleavage of the PKS product by the esterase alnB. 2,4,6-octatrienoic acid is further converted to asperlin via several steps involving the remaining enzymes from the cluster. This Emericella nidulans (strain FGSC A4 / ATCC 38163 / CBS 112.46 / NRRL 194 / M139) (Aspergillus nidulans) protein is Esterase alnB.